Reading from the N-terminus, the 470-residue chain is tRNA modification GTPase MnmE (470 aa).

Positions 30, 92, and 132 each coordinate (6S)-5-formyl-5,6,7,8-tetrahydrofolate. Residues 227–393 form the TrmE-type G domain; that stretch reads GLQVALVGRP…LIKAVLKTCG (167 aa). Asn237 is a K(+) binding site. Residues 237–242, 256–262, 281–284, and 342–345 contribute to the GTP site; these read NVGKSS, TDLPGTT, DTAG, and NKAD. Ser241 lines the Mg(2+) pocket. Positions 256, 258, and 261 each coordinate K(+). Residue Thr262 participates in Mg(2+) binding. Residue Lys470 participates in (6S)-5-formyl-5,6,7,8-tetrahydrofolate binding.

It belongs to the TRAFAC class TrmE-Era-EngA-EngB-Septin-like GTPase superfamily. TrmE GTPase family. As to quaternary structure, homodimer. Heterotetramer of two MnmE and two MnmG subunits. It depends on K(+) as a cofactor.

It localises to the cytoplasm. In terms of biological role, exhibits a very high intrinsic GTPase hydrolysis rate. Involved in the addition of a carboxymethylaminomethyl (cmnm) group at the wobble position (U34) of certain tRNAs, forming tRNA-cmnm(5)s(2)U34. The polypeptide is tRNA modification GTPase MnmE (Prochlorococcus marinus (strain MIT 9313)).